The sequence spans 750 residues: MFSIKPGPRKLPIDNPSLLSWNITDGDLNSKLNTLEYLNCVTNIINACGVYPQDLKDREIISTFHAEKVINDLLKNDYKISLSPDTTYRELNKAAQRSITAPDRIGEGKIWVYQRDTMVERGDNSGVHQYGPAEHFTHIISDKPSPKDKYVAYAINIPDYELAADVYNINVTSPSGQQETFKILINPEHLRQTLERKSLTAVQKSQCEIITPKKPGEAILHAFNATYQQIRENMSEFARCHYGYIQIPPVTTFRADGPETPEEEKGYWFHAYQPEDLCTIHNPMGDLQDFIALVKDAKKFGIDIIPDYTFNFMGIGGSGKNDLDYPSADIRAKISKDIEGGIPGYWQGQVLIPFTIDPVTKERKQIHPEDIHLTAKDFEASKDNISKDEWENLHALKEKRLNGMPKTPPKSDQVIMLQNQYVREMRKYGVRGLRYDAAKHSKHEQIERSITPPLKNYNERLHNTNLFNPKYHEKAVMNYMEYLVTCQLDEEQMSSLLYERDDLSAIDFSLLMKTIKAFSFGGDLQTLASKPSSTISSIPSKRRILININHDFPNNGNLFNDFLFNHQQDEQLAMAYMAALPFSRPLVYWDGQVLKSTTEIKNYDGSTRVGGEAWLNKGCSTYQQLYNEFHALYIDKAGIWSAFEGVFATKNVLAFSRGDSVNINHSPHDGLVIINKGNEEVEGAWPNKLQPGKYKNMGSNSVNIIINNTRKIIPPGKAFMLRGGTLNINIPGRSALLLGKTGEPLNYLYL.

This is an uncharacterized protein from Escherichia coli O157:H7.